The following is a 570-amino-acid chain: Sulfite reductase [NADPH] hemoprotein beta-component (570 aa).

The [4Fe-4S] cluster site is built by C434, C440, C479, and C483. C483 serves as a coordination point for siroheme.

This sequence belongs to the nitrite and sulfite reductase 4Fe-4S domain family. As to quaternary structure, alpha(8)-beta(8). The alpha component is a flavoprotein, the beta component is a hemoprotein. Siroheme serves as cofactor. The cofactor is [4Fe-4S] cluster.

It carries out the reaction hydrogen sulfide + 3 NADP(+) + 3 H2O = sulfite + 3 NADPH + 4 H(+). It functions in the pathway sulfur metabolism; hydrogen sulfide biosynthesis; hydrogen sulfide from sulfite (NADPH route): step 1/1. Its function is as follows. Component of the sulfite reductase complex that catalyzes the 6-electron reduction of sulfite to sulfide. This is one of several activities required for the biosynthesis of L-cysteine from sulfate. In Salmonella typhi, this protein is Sulfite reductase [NADPH] hemoprotein beta-component.